Consider the following 421-residue polypeptide: Inner membrane transport protein YdiN (421 aa).

Residues 1 to 9 (MSQNKAFST) lie on the Cytoplasmic side of the membrane. Residues 10–30 (PFILAVLCIYFSYFLHGISVI) form a helical membrane-spanning segment. At 31–49 (TLAQNMSSLAEKFSTDNAG) the chain is on the periplasmic side. The chain crosses the membrane as a helical span at residues 50-70 (IAYLISGIGLGRLISILFFGV). At 71–78 (ISDKFGRR) the chain is on the cytoplasmic side. A helical transmembrane segment spans residues 79 to 99 (AVILMAVIMYLLFFFGIPACP). Asparagine 100 is a topological domain (periplasmic). Residues 101–121 (LTLAYGLAVCVGIANSALDTG) traverse the membrane as a helical segment. Residues 122–136 (GYPALMECFPKASGS) are Cytoplasmic-facing. Residues 137–157 (AVILVKAMVSFGQMFYPMLVS) traverse the membrane as a helical segment. The Periplasmic portion of the chain corresponds to 158–163 (YMLLNN). The chain crosses the membrane as a helical span at residues 164–184 (IWYGYGLIIPGILFVLITLML). Residues 185 to 215 (LKSKFPSQLVDASVTNELPQMNSKPLVWLEG) are Cytoplasmic-facing. A helical membrane pass occupies residues 216–236 (VSSVLFGVAAFSTFYVIVVWM). Residues 237–251 (PKYAMAFAGMSEAEA) are Periplasmic-facing. The helical transmembrane segment at 252-272 (LKTISYYSMGSLVCVFIFAAL) threads the bilayer. Residues 273-279 (LKKMVRP) are Cytoplasmic-facing. Residues 280-300 (IWANVFNSALATITAAIIYLY) traverse the membrane as a helical segment. Residues 301 to 308 (PSPLVCNA) lie on the Periplasmic side of the membrane. The helical transmembrane segment at 309–329 (GAFVIGFSAAGGILQLGVSVM) threads the bilayer. At 330–342 (SEFFPKSKAKVTS) the chain is on the cytoplasmic side. The helical transmembrane segment at 343–363 (IYMMMGGLANFVIPLITGYLS) threads the bilayer. Topologically, residues 364-369 (NIGLQY) are periplasmic. The chain crosses the membrane as a helical span at residues 370–390 (IIVLDFTFALLALITAIIVFI). Over 391-421 (RYYRVFIIPENDVRFGERKFCTRLNTIKHRG) the chain is Cytoplasmic.

The protein belongs to the major facilitator superfamily.

The protein localises to the cell inner membrane. This Escherichia coli (strain K12) protein is Inner membrane transport protein YdiN (ydiN).